A 531-amino-acid polypeptide reads, in one-letter code: MADILLLDNIDSFTWNLADQLRTNGHNVVIYRNHIPAQTLIDRLATMKNPVLMLSPGPGVPSEAGCMPELLTRLRGKLPIIGICLGHQAIVEAYGGYVGQAGEILHGKASSIEHDGQAMFAGLANPLPVARYHSLVGSNVPAGLTINAHFNGMVMAVRHDADRVCGFQFHPESILTTQGARLLEQTLAWAQQKLEPTNTLQPILEKLYQAQTLTQQESHQLFSAVVRGELKPEQLAAALVSMKIRGEHPNEIAGAATALLENAAPFPRPEYLFADIVGTGGDGSNSINISTASAFVAAACGLKVAKHGNRSVSSKSGSSDLLAAFGINLDMNADKSRQALDELGVCFLFAPKYHTGLRHAMPVRQQLKTRTLFNVLGPLINPAHPPLALIGVYSPELVLPIAETLRVLGYQRAAVVHSGGMDEVSLHAPTIVAELHDGEIKSYQLTAEDFGLTPYHQDQLAGGTPEENRDILTRLLQGKGDAAHEAAVAANVAMLMRLHGQEDLKANAQTVLDVLRNGTAYDRVTALAARG.

The Glutamine amidotransferase type-1 domain occupies 3–196 (DILLLDNIDS…LAWAQQKLEP (194 aa)). 57–59 (GPG) provides a ligand contact to L-glutamine. Cys-84 acts as the Nucleophile; for GATase activity in catalysis. L-glutamine-binding positions include Gln-88 and 134–135 (SL). Residues His-170 and Glu-172 each act as for GATase activity in the active site. The segment at 202–531 (PILEKLYQAQ…DRVTALAARG (330 aa)) is anthranilate phosphoribosyltransferase.

The protein in the C-terminal section; belongs to the anthranilate phosphoribosyltransferase family. Monomer. Heterotetramer consisting of two non-identical subunits: a beta subunit (TrpG) and a large alpha subunit (TrpE).

It carries out the reaction chorismate + L-glutamine = anthranilate + pyruvate + L-glutamate + H(+). The enzyme catalyses N-(5-phospho-beta-D-ribosyl)anthranilate + diphosphate = 5-phospho-alpha-D-ribose 1-diphosphate + anthranilate. The protein operates within amino-acid biosynthesis; L-tryptophan biosynthesis; L-tryptophan from chorismate: step 1/5. Its pathway is amino-acid biosynthesis; L-tryptophan biosynthesis; L-tryptophan from chorismate: step 2/5. Its activity is regulated as follows. Cooperatively feedback inhibited by tryptophan. Its function is as follows. Part of a heterotetrameric complex that catalyzes the two-step biosynthesis of anthranilate, an intermediate in the biosynthesis of L-tryptophan. In the first step, the glutamine-binding beta subunit (TrpG) of anthranilate synthase (AS) provides the glutamine amidotransferase activity which generates ammonia as a substrate that, along with chorismate, is used in the second step, catalyzed by the large alpha subunit of AS (TrpE) to produce anthranilate. In the absence of TrpG, TrpE can synthesize anthranilate directly from chorismate and high concentrations of ammonia. In addition to synthesizing anthranilate, it also catalyzes the second step of the pathway, the transfer of the phosphoribosyl group of 5-phosphorylribose-1-pyrophosphate (PRPP) to anthranilate. This Salmonella typhimurium (strain LT2 / SGSC1412 / ATCC 700720) protein is Bifunctional protein TrpGD (trpGD).